Reading from the N-terminus, the 154-residue chain is Putative glutamine amidotransferase-like protein RP712 (154 aa).

One can recognise a Glutamine amidotransferase type-1 domain in the interval 1–94 (MSIEKEKFWA…QQSVWSFHNK (94 aa)).

This is Putative glutamine amidotransferase-like protein RP712 from Rickettsia prowazekii (strain Madrid E).